Here is an 85-residue protein sequence, read N- to C-terminus: Large ribosomal subunit protein bL27 (85 aa).

Positions 1-21 (MAHKKAGGSSRNGRDSEGRRL) are disordered.

It belongs to the bacterial ribosomal protein bL27 family.

This Rhodospirillum rubrum (strain ATCC 11170 / ATH 1.1.1 / DSM 467 / LMG 4362 / NCIMB 8255 / S1) protein is Large ribosomal subunit protein bL27.